Consider the following 218-residue polypeptide: Cytochrome b6 (218 aa).

A helical transmembrane segment spans residues 35 to 55 (IFYCLGGITLVCFLIQFATGF). Cysteine 38 serves as a coordination point for heme c. Heme b-binding residues include histidine 89 and histidine 103. 3 helical membrane passes run 93–113 (ASMMVLMLILHVFRVYLTGGF), 119–139 (LTWITGVVMAVITVAFGVTGY), and 189–209 (LHTFVMPWLLAVFMLMHFLMI). Positions 190 and 205 each coordinate heme b.

This sequence belongs to the cytochrome b family. PetB subfamily. The 4 large subunits of the cytochrome b6-f complex are cytochrome b6, subunit IV (17 kDa polypeptide, PetD), cytochrome f and the Rieske protein, while the 4 small subunits are PetG, PetL, PetM and PetN. The complex functions as a dimer. Requires heme b as cofactor. The cofactor is heme c.

It is found in the cellular thylakoid membrane. In terms of biological role, component of the cytochrome b6-f complex, which mediates electron transfer between photosystem II (PSII) and photosystem I (PSI), cyclic electron flow around PSI, and state transitions. The polypeptide is Cytochrome b6 (Prochlorococcus marinus (strain NATL1A)).